Consider the following 124-residue polypeptide: Small ribosomal subunit protein uS12 (124 aa).

The residue at position 89 (D89) is a 3-methylthioaspartic acid.

It belongs to the universal ribosomal protein uS12 family. In terms of assembly, part of the 30S ribosomal subunit. Contacts proteins S8 and S17. May interact with IF1 in the 30S initiation complex.

In terms of biological role, with S4 and S5 plays an important role in translational accuracy. Functionally, interacts with and stabilizes bases of the 16S rRNA that are involved in tRNA selection in the A site and with the mRNA backbone. Located at the interface of the 30S and 50S subunits, it traverses the body of the 30S subunit contacting proteins on the other side and probably holding the rRNA structure together. The combined cluster of proteins S8, S12 and S17 appears to hold together the shoulder and platform of the 30S subunit. The polypeptide is Small ribosomal subunit protein uS12 (Shewanella loihica (strain ATCC BAA-1088 / PV-4)).